We begin with the raw amino-acid sequence, 287 residues long: Cell division protein ZipA (287 aa).

A topological domain (periplasmic) is located at residue methionine 1. A helical membrane pass occupies residues 2–22 (EIGLREWLIVIGIIVIAGILF). At 23–287 (DGWRRMRGGK…FERRALTQKR (265 aa)) the chain is on the cytoplasmic side. Positions 70-143 (LDEHDLPSMS…APRQSVNDQP (74 aa)) are disordered.

This sequence belongs to the ZipA family. As to quaternary structure, interacts with FtsZ via their C-terminal domains.

The protein localises to the cell inner membrane. Functionally, essential cell division protein that stabilizes the FtsZ protofilaments by cross-linking them and that serves as a cytoplasmic membrane anchor for the Z ring. Also required for the recruitment to the septal ring of downstream cell division proteins. This is Cell division protein ZipA from Pseudomonas fluorescens (strain SBW25).